A 419-amino-acid polypeptide reads, in one-letter code: Gamma-glutamyl phosphate reductase (419 aa).

Belongs to the gamma-glutamyl phosphate reductase family.

It is found in the cytoplasm. The enzyme catalyses L-glutamate 5-semialdehyde + phosphate + NADP(+) = L-glutamyl 5-phosphate + NADPH + H(+). The protein operates within amino-acid biosynthesis; L-proline biosynthesis; L-glutamate 5-semialdehyde from L-glutamate: step 2/2. Its function is as follows. Catalyzes the NADPH-dependent reduction of L-glutamate 5-phosphate into L-glutamate 5-semialdehyde and phosphate. The product spontaneously undergoes cyclization to form 1-pyrroline-5-carboxylate. The polypeptide is Gamma-glutamyl phosphate reductase (Bordetella bronchiseptica (strain ATCC BAA-588 / NCTC 13252 / RB50) (Alcaligenes bronchisepticus)).